The chain runs to 195 residues: Peptide methionine sulfoxide reductase MsrA 2 (195 aa).

Residue Cys-18 is part of the active site.

This sequence belongs to the MsrA Met sulfoxide reductase family.

The catalysed reaction is L-methionyl-[protein] + [thioredoxin]-disulfide + H2O = L-methionyl-(S)-S-oxide-[protein] + [thioredoxin]-dithiol. It carries out the reaction [thioredoxin]-disulfide + L-methionine + H2O = L-methionine (S)-S-oxide + [thioredoxin]-dithiol. Functionally, has an important function as a repair enzyme for proteins that have been inactivated by oxidation. Catalyzes the reversible oxidation-reduction of methionine sulfoxide in proteins to methionine. The polypeptide is Peptide methionine sulfoxide reductase MsrA 2 (msrA2) (Mesorhizobium japonicum (strain LMG 29417 / CECT 9101 / MAFF 303099) (Mesorhizobium loti (strain MAFF 303099))).